We begin with the raw amino-acid sequence, 514 residues long: Ribonuclease Y (514 aa).

The chain crosses the membrane as a helical span at residues 3–23 (YMIIYEIIAGILIVVAILIHF). In terms of domain architecture, KH spans 204–289 (TVHVVTLPND…EMVEKAEKEL (86 aa)). The HD domain maps to 330 to 423 (VLKHSVEVAY…VQAADAISAA (94 aa)).

This sequence belongs to the RNase Y family.

Its subcellular location is the cell membrane. Functionally, endoribonuclease that initiates mRNA decay. This is Ribonuclease Y from Clostridium kluyveri (strain ATCC 8527 / DSM 555 / NBRC 12016 / NCIMB 10680 / K1).